The primary structure comprises 470 residues: MSKKYDAGVKEYRDTYWTPDYVPLDTDLLACFKCTGQEGVPKEEVAAAVAAESSTGTWSTVWSELLTDLDFYKGRCYRIEDVPGDKESFYAFIAYPLDLFEEGSITNVLTSLVGNVFGFKALRHLRLEDIRFPIAFIKCCAGPPNGIAVERDRMNKYGRPLLGCTIKPKLGLSGKNYGRVVYECLRGGLDFTKDDENINSQPFQRWQNRFEFVAEAIKLAEQETGERKGHYLNVTANTPEEMYERAEFAKELNQPIIMHDFITGGFTANTGLSKWCRKNGMLLHIHRAMHAVIDRHPKHGIHFRVLAKCLRLSGGDQLHTGTVVGKLEGDRQTTLGYIDQLRESFVPEDRSRGNFFDQDWGSMPGVFAVASGGIHVWHMPALVAIFGDDSVLQFGGGTHGHPWGSAAGAAANRVALEACVKARNAGREIEKESRDILMEAGKHSPELAIALETWKEIKFEFDTVDKLDVQ.

Residues Asn115 and Thr165 each contribute to the substrate site. The active-site Proton acceptor is Lys167. Residue Lys169 participates in substrate binding. Residues Lys193, Asp195, and Glu196 each contribute to the Mg(2+) site. The residue at position 193 (Lys193) is an N6-carboxylysine. Catalysis depends on His286, which acts as the Proton acceptor. Arg287, His319, and Ser371 together coordinate substrate.

This sequence belongs to the RuBisCO large chain family. Type I subfamily. In terms of assembly, heterohexadecamer of 8 large chains and 8 small chains. Mg(2+) serves as cofactor.

The protein localises to the carboxysome. The enzyme catalyses 2 (2R)-3-phosphoglycerate + 2 H(+) = D-ribulose 1,5-bisphosphate + CO2 + H2O. The catalysed reaction is D-ribulose 1,5-bisphosphate + O2 = 2-phosphoglycolate + (2R)-3-phosphoglycerate + 2 H(+). Its function is as follows. RuBisCO catalyzes two reactions: the carboxylation of D-ribulose 1,5-bisphosphate, the primary event in carbon dioxide fixation, as well as the oxidative fragmentation of the pentose substrate in the photorespiration process. Both reactions occur simultaneously and in competition at the same active site. The protein is Ribulose bisphosphate carboxylase large chain of Synechococcus sp. (strain CC9311).